The following is a 201-amino-acid chain: Endoribonuclease YbeY (201 aa).

Residues H120, H124, and H130 each contribute to the Zn(2+) site. Positions 151–201 (DGADGADGADGARGAADGAADGGEGRRGDQGRRGDQGRGGGAGEPPAAPAR) are disordered. The segment covering 173-186 (GEGRRGDQGRRGDQ) has biased composition (basic and acidic residues).

Belongs to the endoribonuclease YbeY family. Zn(2+) is required as a cofactor.

It localises to the cytoplasm. Its function is as follows. Single strand-specific metallo-endoribonuclease involved in late-stage 70S ribosome quality control and in maturation of the 3' terminus of the 16S rRNA. The polypeptide is Endoribonuclease YbeY (Frankia casuarinae (strain DSM 45818 / CECT 9043 / HFP020203 / CcI3)).